The following is a 281-amino-acid chain: Bifunctional protein FolD (281 aa).

NADP(+) is bound by residues 164 to 166, Ile-189, and Ile-230; that span reads GAS.

The protein belongs to the tetrahydrofolate dehydrogenase/cyclohydrolase family. In terms of assembly, homodimer.

It catalyses the reaction (6R)-5,10-methylene-5,6,7,8-tetrahydrofolate + NADP(+) = (6R)-5,10-methenyltetrahydrofolate + NADPH. The catalysed reaction is (6R)-5,10-methenyltetrahydrofolate + H2O = (6R)-10-formyltetrahydrofolate + H(+). It functions in the pathway one-carbon metabolism; tetrahydrofolate interconversion. Functionally, catalyzes the oxidation of 5,10-methylenetetrahydrofolate to 5,10-methenyltetrahydrofolate and then the hydrolysis of 5,10-methenyltetrahydrofolate to 10-formyltetrahydrofolate. The protein is Bifunctional protein FolD of Sulfurovum sp. (strain NBC37-1).